We begin with the raw amino-acid sequence, 280 residues long: 3-hydroxyanthranilate 3,4-dioxygenase (280 aa).

The tract at residues 1–160 (MAIPVNVKKW…SEQYKSGKPD (160 aa)) is domain A (catalytic). Position 43 (Arg43) interacts with O2. Fe cation is bound by residues His47, Glu53, and His91. Substrate is bound at residue Glu53. Arg95 and Glu105 together coordinate substrate. Residues 161-177 (PAQPIGKMPFFLNTEQV) form a linker region. The tract at residues 178–280 (MEPFSFQNWL…IALSTSQVPA (103 aa)) is domain B.

It belongs to the 3-HAO family. As to quaternary structure, monomer. Fe(2+) is required as a cofactor.

The protein localises to the cytoplasm. It localises to the cytosol. It carries out the reaction 3-hydroxyanthranilate + O2 = (2Z,4Z)-2-amino-3-carboxymuconate 6-semialdehyde. The protein operates within cofactor biosynthesis; NAD(+) biosynthesis; quinolinate from L-kynurenine: step 3/3. Functionally, catalyzes the oxidative ring opening of 3-hydroxyanthranilate to 2-amino-3-carboxymuconate semialdehyde, which spontaneously cyclizes to quinolinate. This Xenopus tropicalis (Western clawed frog) protein is 3-hydroxyanthranilate 3,4-dioxygenase (haao).